Here is a 281-residue protein sequence, read N- to C-terminus: Bifunctional protein FolD 1 (281 aa).

NADP(+) is bound by residues 165–167 (GRS), Ser190, and Ile231.

It belongs to the tetrahydrofolate dehydrogenase/cyclohydrolase family. As to quaternary structure, homodimer.

It catalyses the reaction (6R)-5,10-methylene-5,6,7,8-tetrahydrofolate + NADP(+) = (6R)-5,10-methenyltetrahydrofolate + NADPH. It carries out the reaction (6R)-5,10-methenyltetrahydrofolate + H2O = (6R)-10-formyltetrahydrofolate + H(+). It participates in one-carbon metabolism; tetrahydrofolate interconversion. Functionally, catalyzes the oxidation of 5,10-methylenetetrahydrofolate to 5,10-methenyltetrahydrofolate and then the hydrolysis of 5,10-methenyltetrahydrofolate to 10-formyltetrahydrofolate. The polypeptide is Bifunctional protein FolD 1 (Desulfitobacterium hafniense (strain Y51)).